The sequence spans 1023 residues: MGKGVGRDKYEPAAVSEHGDKKGKKAKKERDMDELKKEVSMDDHKLSLDELHRKYGTDLSRGLTTARAAEILARDGPNALTPPPTTPEWVKFCRQLFGGFSMLLWIGAILCFLAYGILAATEEDFDNDNLYLGVVLAAVVIITGCFSYYQEAKSSKIMESFKNMVPQQALVIRNGEKMSINAEDVVVGDLVEVKGGDRIPADLRIISANGCKVDNSSLTGESEPQTRSPDFTNENPLETRNIAFFSTNCVEGTARGIVIYTGDRTVMGRIATLASGLEGGQTPIAAEIEHFIHIITGVAVFLGVSFFILSLILEYTWLEAVIFLIGIIVANVPEGLLATVTVCLTLTAKRMARKNCLVKNLEAVETLGSTSTICSDKTGTLTQNRMTVAHMWFDNQIHEADTTENQSGVSFDKTSATWLALSRIAGLCNRAVFQANQENLPILKRAVAGDASESALLKCIELCCGSVKEMRERYTKIVEIPFNSTNKYQLSIHKNLNANEPRHLLVMKGAPERILDRCSSILLHGKEQPLDEELKDAFQNAYLELGGLGERVLGFCHLLLPDEQFPEGFQFDTDEVNFPVDNLCFIGLISMIDPPRAAVPDAVGKCRSAGIKVIMVTGDHPITAKAIAKGVGIISEGNETVEDIAARLNIPVSQVNPRDAKACVVHGSDLKDMTSEQLDDILKYHTEIVFARTSPQQKLIIVEGCQRQGAIVAVTGDGVNDSPALKKADIGVAMGIAGSDVSKQAADMILLDDNFASIVTGVEEGRLIFDNLKKSIAYTLTSNIPEITPFLIFIIANIPLPLGTVTILCIDLGTDMVPAISLAYEQAESDIMKRQPRNPKTDKLVNERLISMAYGQIGMIQALGGFFTYFVILAENGFLPFHLLGIRVDWDDRWINDVEDSYGQQWTYEQRKIVEFTCHTAFFVSIVVVQWADLVICKTRRNSVFQQGMKNKILIFGLFEETALAAFLSYCPGMGVALRMYPLKPTWWFCAFPYSLLIFVYDEIRKLIIRRRPGGWVEKETYY.

A propeptide spanning residues 1-5 (MGKGV) is cleaved from the precursor. Residues 1–11 (MGKGVGRDKYE) are compositionally biased toward basic and acidic residues. The interval 1-38 (MGKGVGRDKYEPAAVSEHGDKKGKKAKKERDMDELKKE) is disordered. Residues 6–87 (GRDKYEPAAV…NALTPPPTTP (82 aa)) lie on the Cytoplasmic side of the membrane. The residue at position 9 (Lys-9) is an N6-acetyllysine. The residue at position 10 (Tyr-10) is a Phosphotyrosine. Phosphoserine; by PKC is present on Ser-16. Lys-21 carries the post-translational modification N6-acetyllysine. Positions 28–38 (KERDMDELKKE) are enriched in basic and acidic residues. Ser-40 and Ser-47 each carry phosphoserine. Residues 82 to 84 (PPP) form a phosphoinositide-3 kinase binding region. A helical membrane pass occupies residues 88–108 (EWVKFCRQLFGGFSMLLWIGA). The Extracellular segment spans residues 109–131 (ILCFLAYGILAATEEDFDNDNLY). A helical transmembrane segment spans residues 132-152 (LGVVLAAVVIITGCFSYYQEA). Residues 153–288 (KSSKIMESFK…GGQTPIAAEI (136 aa)) are Cytoplasmic-facing. Positions 216–235 (SSLTGESEPQTRSPDFTNEN) are disordered. Ser-228 carries the post-translational modification Phosphoserine. Phosphotyrosine is present on Tyr-260. The helical transmembrane segment at 289–308 (EHFIHIITGVAVFLGVSFFI) threads the bilayer. Residues 309-320 (LSLILEYTWLEA) lie on the Extracellular side of the membrane. A helical membrane pass occupies residues 321 to 338 (VIFLIGIIVANVPEGLLA). The Cytoplasmic segment spans residues 339-772 (TVTVCLTLTA…EEGRLIFDNL (434 aa)). Asp-376 (4-aspartylphosphate intermediate) is an active-site residue. A phosphoserine mark is found at Ser-452 and Ser-484. Lys-487 lines the ATP pocket. Phosphotyrosine is present on Tyr-542. The tract at residues 596 to 717 (RAAVPDAVGK…QGAIVAVTGD (122 aa)) is mediates interaction with SCN7A. N6-succinyllysine is present on Lys-661. Ser-668 and Ser-675 each carry phosphoserine. 2 residues coordinate Mg(2+): Asp-717 and Asp-721. Residues 773 to 792 (KKSIAYTLTSNIPEITPFLI) traverse the membrane as a helical segment. The Extracellular portion of the chain corresponds to 793–802 (FIIANIPLPL). The chain crosses the membrane as a helical span at residues 803-823 (GTVTILCIDLGTDMVPAISLA). Residues 824-843 (YEQAESDIMKRQPRNPKTDK) are Cytoplasmic-facing. The helical transmembrane segment at 844 to 866 (LVNERLISMAYGQIGMIQALGGF) threads the bilayer. Topologically, residues 867–918 (FTYFVILAENGFLPFHLLGIRVDWDDRWINDVEDSYGQQWTYEQRKIVEFTC) are extracellular. A helical transmembrane segment spans residues 919 to 938 (HTAFFVSIVVVQWADLVICK). At 939-951 (TRRNSVFQQGMKN) the chain is on the cytoplasmic side. Ser-943 carries the post-translational modification Phosphoserine; by PKA. The chain crosses the membrane as a helical span at residues 952 to 970 (KILIFGLFEETALAAFLSY). At 971–985 (CPGMGVALRMYPLKP) the chain is on the extracellular side. A helical transmembrane segment spans residues 986-1006 (TWWFCAFPYSLLIFVYDEIRK). Topologically, residues 1007–1023 (LIIRRRPGGWVEKETYY) are cytoplasmic.

It belongs to the cation transport ATPase (P-type) (TC 3.A.3) family. Type IIC subfamily. As to quaternary structure, the sodium/potassium-transporting ATPase is composed of a catalytic alpha subunit, an auxiliary non-catalytic beta subunit and an additional regulatory subunit. Interacts with regulatory subunit FXYD1. Interacts with regulatory subunit FXYD3. Interacts with SIK1. Interacts with SLC35G1 and STIM1. Interacts with CLN3; this interaction regulates the sodium/potassium-transporting ATPase complex localization at the plasma membrane. Interacts with SCN7A; activates ATP1A1 P-type sodium:potassium-exchanging transporter activity which indirectly signals to nearby neurons to regulate sodium homeostasis. In terms of processing, phosphorylation on Tyr-10 modulates pumping activity. Phosphorylation of Ser-943 by PKA modulates the response of ATP1A1 to PKC. Dephosphorylation by protein phosphatase 2A (PP2A) following increases in intracellular sodium, leading to increase catalytic activity. Expressed in endocardial endothelial cells.

It is found in the cell membrane. The protein resides in the basolateral cell membrane. Its subcellular location is the sarcolemma. It localises to the cell projection. The protein localises to the axon. It is found in the melanosome. The catalysed reaction is K(+)(out) + Na(+)(in) + ATP + H2O = K(+)(in) + Na(+)(out) + ADP + phosphate + H(+). Its function is as follows. This is the catalytic component of the active enzyme, which catalyzes the hydrolysis of ATP coupled with the exchange of sodium and potassium ions across the plasma membrane. This action creates the electrochemical gradient of sodium and potassium ions, providing the energy for active transport of various nutrients. Could also be part of an osmosensory signaling pathway that senses body-fluid sodium levels and controls salt intake behavior as well as voluntary water intake to regulate sodium homeostasis. The chain is Sodium/potassium-transporting ATPase subunit alpha-1 (ATP1A1) from Oryctolagus cuniculus (Rabbit).